A 312-amino-acid chain; its full sequence is Urease accessory protein UreD (312 aa).

Belongs to the UreD family. As to quaternary structure, ureD, UreF and UreG form a complex that acts as a GTP-hydrolysis-dependent molecular chaperone, activating the urease apoprotein by helping to assemble the nickel containing metallocenter of UreC. The UreE protein probably delivers the nickel.

It localises to the cytoplasm. Its function is as follows. Required for maturation of urease via the functional incorporation of the urease nickel metallocenter. This is Urease accessory protein UreD from Marinomonas sp. (strain MWYL1).